Here is a 270-residue protein sequence, read N- to C-terminus: Shikimate dehydrogenase (NADP(+)) (270 aa).

Residues 15–17 (SKS) and T62 each bind shikimate. K66 functions as the Proton acceptor in the catalytic mechanism. Residue D78 participates in NADP(+) binding. N87 and D103 together coordinate shikimate. Residues 128–132 (GAGGA), 152–157 (NRTVDR), and L213 contribute to the NADP(+) site. Y215 contacts shikimate. G237 is a binding site for NADP(+).

It belongs to the shikimate dehydrogenase family. Homodimer.

The enzyme catalyses shikimate + NADP(+) = 3-dehydroshikimate + NADPH + H(+). It participates in metabolic intermediate biosynthesis; chorismate biosynthesis; chorismate from D-erythrose 4-phosphate and phosphoenolpyruvate: step 4/7. In terms of biological role, involved in the biosynthesis of the chorismate, which leads to the biosynthesis of aromatic amino acids. Catalyzes the reversible NADPH linked reduction of 3-dehydroshikimate (DHSA) to yield shikimate (SA). The chain is Shikimate dehydrogenase (NADP(+)) from Halorhodospira halophila (strain DSM 244 / SL1) (Ectothiorhodospira halophila (strain DSM 244 / SL1)).